The primary structure comprises 334 residues: Glycerol-3-phosphate dehydrogenase [NAD(P)+] (334 aa).

Residues Trp13, Arg33, and Lys106 each coordinate NADPH. Sn-glycerol 3-phosphate-binding residues include Lys106, Gly137, and Ser139. Residue Ala141 participates in NADPH binding. The sn-glycerol 3-phosphate site is built by Lys192, Asp245, Ser255, Arg256, and Asn257. Lys192 functions as the Proton acceptor in the catalytic mechanism. Residue Arg256 participates in NADPH binding. Positions 280 and 282 each coordinate NADPH.

This sequence belongs to the NAD-dependent glycerol-3-phosphate dehydrogenase family.

It localises to the cytoplasm. The catalysed reaction is sn-glycerol 3-phosphate + NAD(+) = dihydroxyacetone phosphate + NADH + H(+). It catalyses the reaction sn-glycerol 3-phosphate + NADP(+) = dihydroxyacetone phosphate + NADPH + H(+). Its pathway is membrane lipid metabolism; glycerophospholipid metabolism. Functionally, catalyzes the reduction of the glycolytic intermediate dihydroxyacetone phosphate (DHAP) to sn-glycerol 3-phosphate (G3P), the key precursor for phospholipid synthesis. In Chlamydia abortus (strain DSM 27085 / S26/3) (Chlamydophila abortus), this protein is Glycerol-3-phosphate dehydrogenase [NAD(P)+].